Reading from the N-terminus, the 660-residue chain is GRIP and coiled-coil domain-containing protein 2 (660 aa).

The interval 1-28 (MSAPESSISPVPPPGSSSGGGKKLDSLP) is disordered. Coiled-coil stretches lie at residues 30–92 (EDLV…VENN), 115–464 (EWKE…KAIA), and 517–596 (DEYR…EYLK). In terms of domain architecture, GRIP spans 585–636 (ELSNEKNMEYLKNVFVQFLKPESVPAERDQLVIVLQRVLHLSPKEVEILKAA).

The protein is GRIP and coiled-coil domain-containing protein 2 of Caenorhabditis elegans.